The primary structure comprises 106 residues: ATP-dependent Clp protease adapter protein ClpS (106 aa).

Residues 1–13 (MPRKTSHEHDHGL) show a composition bias toward basic and acidic residues. The interval 1-21 (MPRKTSHEHDHGLVVETSKPE) is disordered.

The protein belongs to the ClpS family. As to quaternary structure, binds to the N-terminal domain of the chaperone ClpA.

Involved in the modulation of the specificity of the ClpAP-mediated ATP-dependent protein degradation. The sequence is that of ATP-dependent Clp protease adapter protein ClpS from Xanthomonas campestris pv. campestris (strain 8004).